Consider the following 813-residue polypeptide: Phenylalanine--tRNA ligase beta subunit (813 aa).

The tRNA-binding domain maps to 42 to 151 (AKDFNHVVIG…ADAPVGKAYA (110 aa)). The B5 domain maps to 405–480 (VKKAPVDITI…RLNGYEHIPE (76 aa)). Positions 458, 464, 467, and 468 each coordinate Mg(2+). One can recognise an FDX-ACB domain in the interval 720–813 (SKFPIVERDF…LKKNFDLSVR (94 aa)).

Belongs to the phenylalanyl-tRNA synthetase beta subunit family. Type 1 subfamily. In terms of assembly, tetramer of two alpha and two beta subunits. It depends on Mg(2+) as a cofactor.

It is found in the cytoplasm. The enzyme catalyses tRNA(Phe) + L-phenylalanine + ATP = L-phenylalanyl-tRNA(Phe) + AMP + diphosphate + H(+). The protein is Phenylalanine--tRNA ligase beta subunit of Bdellovibrio bacteriovorus (strain ATCC 15356 / DSM 50701 / NCIMB 9529 / HD100).